The sequence spans 272 residues: Ribonuclease HII (272 aa).

Residues 30–221 (GPVAGVDEVG…VRRAAEATGV (192 aa)) form the RNase H type-2 domain. D36, E37, and D130 together coordinate a divalent metal cation.

It belongs to the RNase HII family. The cofactor is Mn(2+). It depends on Mg(2+) as a cofactor.

Its subcellular location is the cytoplasm. The catalysed reaction is Endonucleolytic cleavage to 5'-phosphomonoester.. Endonuclease that specifically degrades the RNA of RNA-DNA hybrids. The polypeptide is Ribonuclease HII (Mycolicibacterium smegmatis (strain ATCC 700084 / mc(2)155) (Mycobacterium smegmatis)).